A 192-amino-acid chain; its full sequence is Putative integrase/recombinase y4gC (192 aa).

The region spanning 1–183 (MPSILERDQI…ATEDLRAIAL (183 aa)) is the Tyr recombinase domain. Catalysis depends on residues arginine 41, lysine 66, histidine 135, arginine 138, and histidine 161. Catalysis depends on tyrosine 170, which acts as the O-(3'-phospho-DNA)-tyrosine intermediate.

This sequence belongs to the 'phage' integrase family.

The chain is Putative integrase/recombinase y4gC from Sinorhizobium fredii (strain NBRC 101917 / NGR234).